Consider the following 257-residue polypeptide: UPF0246 protein ECA3888 (257 aa).

This sequence belongs to the UPF0246 family.

This chain is UPF0246 protein ECA3888, found in Pectobacterium atrosepticum (strain SCRI 1043 / ATCC BAA-672) (Erwinia carotovora subsp. atroseptica).